The chain runs to 373 residues: Putative glutamate--cysteine ligase 2 (373 aa).

Belongs to the glutamate--cysteine ligase type 2 family. YbdK subfamily. As to quaternary structure, homodimer.

The enzyme catalyses L-cysteine + L-glutamate + ATP = gamma-L-glutamyl-L-cysteine + ADP + phosphate + H(+). Functionally, ATP-dependent carboxylate-amine ligase which exhibits weak glutamate--cysteine ligase activity. This Enterobacter sp. (strain 638) protein is Putative glutamate--cysteine ligase 2.